Consider the following 33-residue polypeptide: Brevinin-2HSb (33 aa).

Residues C27 and C33 are joined by a disulfide bond.

Expressed by the skin glands.

Its subcellular location is the secreted. In terms of biological role, has antibacterial activity against the Gram-positive bacterium S.aureus ATCC 25923 and the Gram-negative bacterium E.coli ATCC 25726. This chain is Brevinin-2HSb, found in Odorrana hosii (Hose's rock frog).